A 368-amino-acid chain; its full sequence is Cobalt-precorrin-5B C(1)-methyltransferase (368 aa).

It belongs to the CbiD family.

The enzyme catalyses Co-precorrin-5B + S-adenosyl-L-methionine = Co-precorrin-6A + S-adenosyl-L-homocysteine. It functions in the pathway cofactor biosynthesis; adenosylcobalamin biosynthesis; cob(II)yrinate a,c-diamide from sirohydrochlorin (anaerobic route): step 6/10. In terms of biological role, catalyzes the methylation of C-1 in cobalt-precorrin-5B to form cobalt-precorrin-6A. This is Cobalt-precorrin-5B C(1)-methyltransferase from Synechococcus sp. (strain CC9605).